The primary structure comprises 194 residues: Imidazoleglycerol-phosphate dehydratase (194 aa).

The protein belongs to the imidazoleglycerol-phosphate dehydratase family.

Its subcellular location is the cytoplasm. It catalyses the reaction D-erythro-1-(imidazol-4-yl)glycerol 3-phosphate = 3-(imidazol-4-yl)-2-oxopropyl phosphate + H2O. It participates in amino-acid biosynthesis; L-histidine biosynthesis; L-histidine from 5-phospho-alpha-D-ribose 1-diphosphate: step 6/9. The polypeptide is Imidazoleglycerol-phosphate dehydratase (Streptococcus thermophilus (strain ATCC BAA-491 / LMD-9)).